The following is a 398-amino-acid chain: 8-amino-7-oxononanoate synthase (398 aa).

Substrate is bound at residue Arg23. Pyridoxal 5'-phosphate is bound at residue 110–111 (GY). His135 contacts substrate. Residues Ser181, His209, and Thr238 each coordinate pyridoxal 5'-phosphate. At Lys241 the chain carries N6-(pyridoxal phosphate)lysine. Residue Thr355 coordinates substrate.

The protein belongs to the class-II pyridoxal-phosphate-dependent aminotransferase family. BioF subfamily. In terms of assembly, homodimer. The cofactor is pyridoxal 5'-phosphate.

It carries out the reaction 6-carboxyhexanoyl-[ACP] + L-alanine + H(+) = (8S)-8-amino-7-oxononanoate + holo-[ACP] + CO2. It functions in the pathway cofactor biosynthesis; biotin biosynthesis. In terms of biological role, catalyzes the decarboxylative condensation of pimeloyl-[acyl-carrier protein] and L-alanine to produce 8-amino-7-oxononanoate (AON), [acyl-carrier protein], and carbon dioxide. This chain is 8-amino-7-oxononanoate synthase, found in Cellvibrio japonicus (strain Ueda107) (Pseudomonas fluorescens subsp. cellulosa).